An 89-amino-acid chain; its full sequence is Inner kinetochore subunit mhf2 (89 aa).

Belongs to the CENP-X/MHF2 family. As to quaternary structure, the MHF histone-fold complex is a heterotetramer of 2 mhf1-mhf2 heterodimers. Component of the inner kinetochore constitutive centromere-associated network (CCAN) (also known as central kinetochore Sim4 complex in fission yeast), which is composed of at least cnl2, cnp3, cnp20, fta1, fta2, fta3, fta4, fta6, fta7, mal2, mhf1, mhf2, mis6, mis15, mis17, sim4 and wip1.

The protein resides in the nucleus. The protein localises to the cytoplasm. Functionally, component of a FANCM-MHF complex that promotes gene conversion at blocked replication forks, probably by reversal of the stalled fork. FANCM-MHF promotes non-crossover recombination. In Schizosaccharomyces pombe (strain 972 / ATCC 24843) (Fission yeast), this protein is Inner kinetochore subunit mhf2.